The following is a 189-amino-acid chain: Potassium-transporting ATPase KdpC subunit (189 aa).

A helical membrane pass occupies residues 11–31 (LFVLLTVITGVLYPVFVTGLA).

Belongs to the KdpC family. In terms of assembly, the system is composed of three essential subunits: KdpA, KdpB and KdpC.

It is found in the cell inner membrane. Functionally, part of the high-affinity ATP-driven potassium transport (or Kdp) system, which catalyzes the hydrolysis of ATP coupled with the electrogenic transport of potassium into the cytoplasm. This subunit acts as a catalytic chaperone that increases the ATP-binding affinity of the ATP-hydrolyzing subunit KdpB by the formation of a transient KdpB/KdpC/ATP ternary complex. The polypeptide is Potassium-transporting ATPase KdpC subunit (Polynucleobacter asymbioticus (strain DSM 18221 / CIP 109841 / QLW-P1DMWA-1) (Polynucleobacter necessarius subsp. asymbioticus)).